A 511-amino-acid polypeptide reads, in one-letter code: Glucose-1-phosphate adenylyltransferase large subunit 1, chloroplastic/amyloplastic (511 aa).

Residues methionine 1–alanine 58 constitute a chloroplast transit peptide.

Belongs to the bacterial/plant glucose-1-phosphate adenylyltransferase family. Heterotetramer composed of two small and two large subunits. As to expression, expressed in leaves and stems.

The protein localises to the plastid. The protein resides in the chloroplast. It localises to the amyloplast. The enzyme catalyses alpha-D-glucose 1-phosphate + ATP + H(+) = ADP-alpha-D-glucose + diphosphate. It functions in the pathway glycan biosynthesis; starch biosynthesis. Activated by 3'phosphoglycerate, inhibited by orthophosphate. Allosteric regulation. In terms of biological role, involved in synthesis of starch. Catalyzes the synthesis of ADP-glucose, a molecule that serves as an activated glycosyl donor for alpha-1,4-glucan synthesis. Essential for starch synthesis in leaf chloroplasts and endosperm amyloplasts. This chain is Glucose-1-phosphate adenylyltransferase large subunit 1, chloroplastic/amyloplastic, found in Oryza sativa subsp. japonica (Rice).